The primary structure comprises 366 residues: MSGRLSELAAEFGMVERALGDPAALADPQAYTRLTRRHRELLPLVTLLREREALESDLRGAQELLSDPDMRELAQNEITEATARLEQLGAELEVLLLPTDPDDLKNVILELRAGAGGAEAGLFVMDLLRMYTRYAEDRGLRLNVLEASESDLGGASKVVAEISGEFAFRAFKWERGVHRVQRVPATESQGRIHTSTVTVAVLPEAEQGEVQLDLSEVRIDVFRSQGAGGQGVNTTDSAVRAVYRAGTPDEIMVVCQDGRSQIKNREKALVVLASRLAERERAARDAQEARDRAAQVGSGERSEKIRTYNYPQNRVTDHRLEGDSKNHPLDSVMAGGLGPVVSALARDERERQLLAASAEEARDGAA.

Q230 carries the N5-methylglutamine modification. Composition is skewed to basic and acidic residues over residues 283–293 (ARDAQEARDRA) and 315–328 (VTDHRLEGDSKNHP). Residues 283-335 (ARDAQEARDRAAQVGSGERSEKIRTYNYPQNRVTDHRLEGDSKNHPLDSVMAG) are disordered.

Belongs to the prokaryotic/mitochondrial release factor family. In terms of processing, methylated by PrmC. Methylation increases the termination efficiency of RF1.

The protein localises to the cytoplasm. Peptide chain release factor 1 directs the termination of translation in response to the peptide chain termination codons UAG and UAA. This is Peptide chain release factor 1 from Deinococcus deserti (strain DSM 17065 / CIP 109153 / LMG 22923 / VCD115).